We begin with the raw amino-acid sequence, 164 residues long: Thiol peroxidase (164 aa).

Residues 16 to 162 enclose the Thioredoxin domain; sequence LQVGDIAKDF…YEAAINAAKI (147 aa). Cysteine 58 serves as the catalytic Cysteine sulfenic acid (-SOH) intermediate. Cysteine 58 and cysteine 92 are oxidised to a cystine.

It belongs to the peroxiredoxin family. Tpx subfamily. In terms of assembly, homodimer.

The catalysed reaction is a hydroperoxide + [thioredoxin]-dithiol = an alcohol + [thioredoxin]-disulfide + H2O. Functionally, thiol-specific peroxidase that catalyzes the reduction of hydrogen peroxide and organic hydroperoxides to water and alcohols, respectively. Plays a role in cell protection against oxidative stress by detoxifying peroxides. This Streptococcus agalactiae serotype V (strain ATCC BAA-611 / 2603 V/R) protein is Thiol peroxidase.